The primary structure comprises 762 residues: Mitochondrial intermediate peptidase (762 aa).

Residues 1 to 28 constitute a mitochondrion transit peptide; the sequence is MQVRTLLTLGKKKVIGNRQCILSLYRKY. H544 lines the Zn(2+) pocket. E545 is an active-site residue. Residues H548 and H551 each contribute to the Zn(2+) site.

Belongs to the peptidase M3 family. It depends on Zn(2+) as a cofactor.

The protein resides in the mitochondrion matrix. It carries out the reaction Release of an N-terminal octapeptide as second stage of processing of some proteins imported into the mitochondrion.. Its function is as follows. Cleaves proteins, imported into the mitochondrion, to their mature size. While most mitochondrial precursor proteins are processed to the mature form in one step by mitochondrial processing peptidase (MPP), the sequential cleavage by MIP of an octapeptide after initial processing by MPP is a required step for a subgroup of nuclear-encoded precursor proteins destined for the matrix or the inner membrane. This chain is Mitochondrial intermediate peptidase (oct1), found in Schizosaccharomyces pombe (strain 972 / ATCC 24843) (Fission yeast).